Here is a 430-residue protein sequence, read N- to C-terminus: NEDD8-activating enzyme E1 catalytic subunit (430 aa).

ATP is bound at residue 52 to 76 (GLGCELLKNLALSGFRTIEVIDMDT). The Glycyl thioester intermediate role is filled by cysteine 211.

The protein belongs to the ubiquitin-activating E1 family. UBA3 subfamily. In terms of assembly, heterodimer of uba-3 and ula-1. Interacts with NEDD8 and ubc-12. Expressed in intestine, vulva epithelium and head and tail neurons.

Its subcellular location is the nucleus. The protein resides in the cytoplasm. The enzyme catalyses ATP + [NEDD8 protein] + [E1 NEDD8-activating enzyme]-L-cysteine = AMP + diphosphate + [E1 NEDD8-activating enzyme]-S-[NEDD8 protein]-yl-L-cysteine.. It participates in protein modification; protein neddylation. Functionally, catalytic subunit of the dimeric rfl-1 (uba-3)-ula-1 E1 enzyme. E1 activates NEDD8 by first adenylating its C-terminal glycine residue with ATP, thereafter linking this residue to the side chain of the catalytic cysteine, yielding a NEDD8-uba-3 thioester and free AMP. E1 finally transfers NEDD8 to the catalytic cysteine of ubc-12. Required for cytokinesis and mitotic spindle orientation during early embryogenesis. The polypeptide is NEDD8-activating enzyme E1 catalytic subunit (Caenorhabditis elegans).